The sequence spans 509 residues: Glutamyl-tRNA(Gln) amidotransferase subunit A (509 aa).

Active-site charge relay system residues include K75 and S150. S174 (acyl-ester intermediate) is an active-site residue. Positions 471-509 are disordered; sequence DWHKRRPPLGQPPLEQAQGTAQQPKAKSKSTKGSKKSKS. The span at 496 to 509 shows a compositional bias: basic residues; it reads AKSKSTKGSKKSKS.

The protein belongs to the amidase family. GatA subfamily. As to quaternary structure, heterotrimer of A, B and C subunits.

The enzyme catalyses L-glutamyl-tRNA(Gln) + L-glutamine + ATP + H2O = L-glutaminyl-tRNA(Gln) + L-glutamate + ADP + phosphate + H(+). Allows the formation of correctly charged Gln-tRNA(Gln) through the transamidation of misacylated Glu-tRNA(Gln) in organisms which lack glutaminyl-tRNA synthetase. The reaction takes place in the presence of glutamine and ATP through an activated gamma-phospho-Glu-tRNA(Gln). The polypeptide is Glutamyl-tRNA(Gln) amidotransferase subunit A (Synechococcus sp. (strain JA-3-3Ab) (Cyanobacteria bacterium Yellowstone A-Prime)).